The primary structure comprises 89 residues: Small ribosomal subunit protein uS19 (89 aa).

The protein belongs to the universal ribosomal protein uS19 family.

In terms of biological role, protein S19 forms a complex with S13 that binds strongly to the 16S ribosomal RNA. This chain is Small ribosomal subunit protein uS19, found in Xanthomonas axonopodis pv. citri (strain 306).